The sequence spans 73 residues: MLLVFLGPVNSFMKGIRDVGFGKPPRILSVSRARLASNTSKACPPRQLARSWRFTVISCNHFLRDLLTDRFEG.

This is an uncharacterized protein from Human cytomegalovirus (strain AD169) (HHV-5).